A 315-amino-acid chain; its full sequence is Ferrochelatase (315 aa).

Positions 193 and 273 each coordinate Fe cation.

The protein belongs to the ferrochelatase family.

The protein localises to the cytoplasm. The enzyme catalyses heme b + 2 H(+) = protoporphyrin IX + Fe(2+). It functions in the pathway porphyrin-containing compound metabolism; protoheme biosynthesis; protoheme from protoporphyrin-IX: step 1/1. In terms of biological role, catalyzes the ferrous insertion into protoporphyrin IX. This Wolbachia pipientis wMel protein is Ferrochelatase.